Reading from the N-terminus, the 648-residue chain is RAF proto-oncogene serine/threonine-protein kinase (648 aa).

Serine 29 is modified (phosphoserine; by MAPK1). A Phosphoserine; by PKA and MAPK1 modification is found at serine 43. The 76-residue stretch at 56–131 folds into the RBD domain; the sequence is NTIRVFLPNK…IGEELQVDFL (76 aa). A Phorbol-ester/DAG-type zinc finger spans residues 138 to 184; it reads THNFARKTFLKLAFCDICQKFLLNGFRCQTCGYKFHEHCSTKVPTMC. Histidine 139, cysteine 152, cysteine 155, cysteine 165, cysteine 168, histidine 173, cysteine 176, and cysteine 184 together coordinate Zn(2+). The tract at residues 220–334 is disordered; it reads SVSRMPVSSQ…QEKNKIRPRG (115 aa). The segment covering 239 to 271 has biased composition (polar residues); that stretch reads TFNTSSPSSEGSLSQRQRSTSTPNVHMVSTTLP. Residue serine 252 is modified to Phosphoserine. The residue at position 259 (serine 259) is a Phosphoserine; by PKA, PKC and PKB/AKT1. Position 268 is a phosphothreonine; by autocatalysis (threonine 268). Phosphothreonine; by PKA is present on threonine 269. Residues 275–285 show a composition bias toward basic and acidic residues; it reads RMIEDAIRSHS. A compositionally biased stretch (low complexity) spans 286-301; sequence ESASPSALSSSPNNLS. Serine 289 bears the Phosphoserine; by MAPK1 mark. Phosphoserine is present on serine 296. Serine 301 carries the post-translational modification Phosphoserine; by MAPK1. The tract at residues 331-349 is interaction with PEBP1/RKIP; the sequence is RPRGQRDSSYYWEIEASEV. The residue at position 338 (serine 338) is a Phosphoserine; by PAK1, PAK2, PAK3 and PAK5. Residue serine 339 is modified to Phosphoserine; by PAK1, PAK2 and PAK3. Residues tyrosine 340 and tyrosine 341 each carry the phosphotyrosine; by SRC modification. Residues 349-609 enclose the Protein kinase domain; it reads VMLSTRIGSG…PQILSSIELL (261 aa). Residues 355 to 363 and lysine 375 each bind ATP; that span reads IGSGSFGTV. Aspartate 468 acts as the Proton acceptor in catalysis. Serine 471 carries the phosphoserine modification. Threonine 491 carries the post-translational modification Phosphothreonine. Position 494 is a phosphoserine (serine 494). Serine 499 is subject to Phosphoserine; by PKC. A Symmetric dimethylarginine; by PRMT5 modification is found at arginine 563. A Phosphoserine modification is found at serine 621. At serine 642 the chain carries Phosphoserine; by MAPK1.

This sequence belongs to the protein kinase superfamily. TKL Ser/Thr protein kinase family. RAF subfamily. Monomer. Homodimer. Heterodimerizes with BRAF and this heterodimer possesses a highly increased kinase activity compared to the respective homodimers or monomers. Heterodimerization is mitogen-regulated and enhanced by 14-3-3 proteins. MAPK1/ERK2 activation can induce a negative feedback that promotes the dissociation of the heterodimer. Forms a multiprotein complex with Ras (M-Ras/MRAS), SHOC2 and protein phosphatase 1 (PPP1CA, PPP1CB and PPP1CC). Interacts with LZTR1. Interacts with Ras proteins; the interaction is antagonized by RIN1. Weakly interacts with RIT1. Interacts (via N-terminus) with RGS14 (via RBD domains); the interaction mediates the formation of a ternary complex with BRAF, a ternary complex inhibited by GNAI1. Probably forms a complex composed of chaperones HSP90 and HSP70, co-chaperones CDC37, PPP5C, TSC1 and client protein TSC2, CDK4, AKT, RAF1 and NR3C1; this complex does not contain co-chaperones STIP1/HOP and PTGES3/p23. Interacts with STK3/MST2; the interaction inhibits its pro-apoptotic activity. Interacts (when phosphorylated at Ser-259) with YWHAZ (unphosphorylated at 'Thr-232'). Interacts with MAP2K1/MEK1 and MAP2K2/MEK2. Interacts with MAP3K5/ASF1 (via N-terminus) and this interaction inhibits the proapoptotic function of MAP3K5/ASK1. Interacts with PAK1 (via kinase domain). The phosphorylated form interacts with PIN1. The Ser-338 and Ser-339 phosphorylated form (by PAK1) interacts with BCL2. Interacts with PEBP1/RKIP and this interaction is enhanced if RAF1 is phosphorylated on residues Ser-338, Ser-339, Tyr-340 and Tyr-341. Interacts with ADCY2, ADCY5, ADCY6, DGKH, RCAN1/DSCR1, PPP1R12A, PKB/AKT1, PPP2CA, PPP2R1B, SPRY2, SPRY4, CNKSR1/CNK1, KSR2 and PHB/prohibitin. Interacts with ROCK2. In its active form, interacts with PRMT5. Interacts with FAM83B; displaces 14-3-3 proteins from RAF1 and activates RAF1. Interacts with PDE8A; the interaction promotes RAF1 activity. Interacts with MFHAS1. Interacts with GLS. Interacts with NEK10 and MAP2K1; the interaction is direct with NEK10 and required for ERK1/2-signaling pathway activation in response to UV irradiation. It depends on Zn(2+) as a cofactor. Phosphorylation at Thr-269, Ser-338, Tyr-341, Thr-491 and Ser-494 results in its activation. Phosphorylation at Ser-29, Ser-43, Ser-289, Ser-296, Ser-301 and Ser-642 by MAPK1/ERK2 results in its inactivation. Phosphorylation at Ser-259 induces the interaction with YWHAZ and inactivates kinase activity. Dephosphorylation of Ser-259 by the SHOC2-MRAS-PP1c (SMP) complex consisting of SHOC2, GTP-bound M-Ras/MRAS and the catalytic subunit of protein phosphatase 1 (PPP1CA, PPP1CB or PPP1CC); this relieves inactivation and stimulates kinase activity. Phosphorylation at Ser-338 by PAK1 and PAK5 and Ser-339 by PAK1 is required for its mitochondrial localization. Phosphorylation at Ser-621 in response to growth factor treatment stabilizes the protein, possibly by preventing proteasomal degradation. Phosphorylation at Ser-289, Ser-296, Ser-301, Ser-338 and Ser-621 are somehow linked to the methylation potential of cells. Treatment of cells with HGF in the presence of the methylation inhibitor 5'-methylthioadenosine (MTA) results in increased phosphorylation at Ser-338 and Ser-621 and decreased phosphorylation at Ser-296, Ser-301 and Ser-338. Dephosphorylation at Ser-338 by PPP5C results in an activity decrease. Post-translationally, methylated at Arg-563 in response to EGF treatment. This modification leads to destabilization of the protein, possibly through proteasomal degradation. In skeletal muscle, isoform 1 is more abundant than isoform 2.

The protein resides in the cytoplasm. Its subcellular location is the cell membrane. It is found in the mitochondrion. The protein localises to the nucleus. The enzyme catalyses L-seryl-[protein] + ATP = O-phospho-L-seryl-[protein] + ADP + H(+). The catalysed reaction is L-threonyl-[protein] + ATP = O-phospho-L-threonyl-[protein] + ADP + H(+). Regulation is a highly complex process involving membrane recruitment, protein-protein interactions, dimerization, and phosphorylation/dephosphorylation events. Ras-GTP recruits RAF1 to the membrane, thereby promoting its activation. The inactive conformation of RAF1 is maintained by autoinhibitory interactions occurring between the N-terminal regulatory and the C-terminal catalytic domains and by the binding of a 14-3-3 protein that contacts two phosphorylation sites, Ser-259 and Ser-621. Upon mitogenic stimulation, Ras and PPP2R1A cooperate to release autoinhibition and the subsequent phosphorylation of activating sites: Ser-338, Tyr-341, Thr-491, and Ser-494, yields a fully active kinase. Through a negative feedback mechanism involving MAPK1/ERK2, RAF1 is phosphorylated on Ser-29, Ser-43, Ser-289, Ser-296, Ser-301 and Ser-642 by MAPK1/ERK2, which yields an inactive, desensitized kinase. The signaling-competent conformation of RAF1 is finally re-established by the coordinated action of PIN1, a prolyl isomerase that converts pSer and pThr residues from the cis to the trans conformation, which is preferentially recognized and dephosphorylated by PPP2R1A. Activated by homodimerization and heterodimerization (with BRAF). Also regulated through association with other proteins such as KSR2, CNKSR1/CNK1, PEBP1/RKIP, PHB/prohibitin and SPRY4. PEBP1/RKIP acts by dissociating RAF1 from its substrates MAP2K1/MEK1 and MAP2K2/MEK2. PHB/prohibitin facilitates the displacement of 14-3-3 from RAF1 by activated Ras, thereby promoting cell membrane localization and phosphorylation of RAF1 at the activating Ser-338. SPRY4 inhibits Ras-independent, but not Ras-dependent, activation of RAF1. CNKSR1/CNK1 regulates Src-mediated RAF1 activation. Serine/threonine-protein kinase that acts as a regulatory link between the membrane-associated Ras GTPases and the MAPK/ERK cascade, and this critical regulatory link functions as a switch determining cell fate decisions including proliferation, differentiation, apoptosis, survival and oncogenic transformation. RAF1 activation initiates a mitogen-activated protein kinase (MAPK) cascade that comprises a sequential phosphorylation of the dual-specific MAPK kinases (MAP2K1/MEK1 and MAP2K2/MEK2) and the extracellular signal-regulated kinases (MAPK3/ERK1 and MAPK1/ERK2). The phosphorylated form of RAF1 (on residues Ser-338 and Ser-339, by PAK1) phosphorylates BAD/Bcl2-antagonist of cell death at 'Ser-75'. Phosphorylates adenylyl cyclases: ADCY2, ADCY5 and ADCY6, resulting in their activation. Phosphorylates PPP1R12A resulting in inhibition of the phosphatase activity. Phosphorylates TNNT2/cardiac muscle troponin T. Can promote NF-kB activation and inhibit signal transducers involved in motility (ROCK2), apoptosis (MAP3K5/ASK1 and STK3/MST2), proliferation and angiogenesis (RB1). Can protect cells from apoptosis also by translocating to the mitochondria where it binds BCL2 and displaces BAD/Bcl2-antagonist of cell death. Regulates Rho signaling and migration, and is required for normal wound healing. Plays a role in the oncogenic transformation of epithelial cells via repression of the TJ protein, occludin (OCLN) by inducing the up-regulation of a transcriptional repressor SNAI2/SLUG, which induces down-regulation of OCLN. Restricts caspase activation in response to selected stimuli, notably Fas stimulation, pathogen-mediated macrophage apoptosis, and erythroid differentiation. This is RAF proto-oncogene serine/threonine-protein kinase from Homo sapiens (Human).